We begin with the raw amino-acid sequence, 73 residues long: UPF0352 protein HD_1515 (73 aa).

Belongs to the UPF0352 family.

The protein is UPF0352 protein HD_1515 of Haemophilus ducreyi (strain 35000HP / ATCC 700724).